Reading from the N-terminus, the 116-residue chain is Nucleoid-associated protein PMM0020 (116 aa).

The span at 87-98 shows a compositional bias: basic and acidic residues; the sequence is ESSTTTMKERMN. The tract at residues 87 to 116 is disordered; it reads ESSTTTMKERMNDLTGGLNLNLPGLDNNDS. Low complexity predominate over residues 99 to 116; the sequence is DLTGGLNLNLPGLDNNDS.

Belongs to the YbaB/EbfC family. Homodimer.

It is found in the cytoplasm. Its subcellular location is the nucleoid. In terms of biological role, binds to DNA and alters its conformation. May be involved in regulation of gene expression, nucleoid organization and DNA protection. This is Nucleoid-associated protein PMM0020 from Prochlorococcus marinus subsp. pastoris (strain CCMP1986 / NIES-2087 / MED4).